Here is an 84-residue protein sequence, read N- to C-terminus: Cell division topological specificity factor (84 aa).

This sequence belongs to the MinE family.

Its function is as follows. Prevents the cell division inhibition by proteins MinC and MinD at internal division sites while permitting inhibition at polar sites. This ensures cell division at the proper site by restricting the formation of a division septum at the midpoint of the long axis of the cell. The sequence is that of Cell division topological specificity factor from Cupriavidus pinatubonensis (strain JMP 134 / LMG 1197) (Cupriavidus necator (strain JMP 134)).